The sequence spans 135 residues: MESRHAIREAAFQALFALATNPEADKDAVYAEVLPQDTEVPAYLTTLVEGVLSKQADLDAALTPQLKKGWSLSRLTKPDLIILRLGLYEIRYEEAMPEAAAINEAINLAKRYSDDQSAKFVNGILANFIQATPQA.

It belongs to the NusB family.

Involved in transcription antitermination. Required for transcription of ribosomal RNA (rRNA) genes. Binds specifically to the boxA antiterminator sequence of the ribosomal RNA (rrn) operons. The chain is Transcription antitermination protein NusB from Lacticaseibacillus casei (strain BL23) (Lactobacillus casei).